Consider the following 265-residue polypeptide: 3-methyl-2-oxobutanoate hydroxymethyltransferase (265 aa).

2 residues coordinate Mg(2+): Asp45 and Asp84. Residues 45-46 (DS), Asp84, and Lys112 contribute to the 3-methyl-2-oxobutanoate site. Glu114 serves as a coordination point for Mg(2+). Catalysis depends on Glu181, which acts as the Proton acceptor.

Belongs to the PanB family. Homodecamer; pentamer of dimers. Requires Mg(2+) as cofactor.

The protein resides in the cytoplasm. The enzyme catalyses 3-methyl-2-oxobutanoate + (6R)-5,10-methylene-5,6,7,8-tetrahydrofolate + H2O = 2-dehydropantoate + (6S)-5,6,7,8-tetrahydrofolate. Its pathway is cofactor biosynthesis; (R)-pantothenate biosynthesis; (R)-pantoate from 3-methyl-2-oxobutanoate: step 1/2. Its function is as follows. Catalyzes the reversible reaction in which hydroxymethyl group from 5,10-methylenetetrahydrofolate is transferred onto alpha-ketoisovalerate to form ketopantoate. This is 3-methyl-2-oxobutanoate hydroxymethyltransferase from Pectobacterium carotovorum subsp. carotovorum (strain PC1).